The primary structure comprises 218 residues: Probable glutamine ABC transporter permease protein GlnP (218 aa).

The next 3 membrane-spanning stretches (helical) occupy residues phenylalanine 19 to isoleucine 39, leucine 65 to leucine 85, and phenylalanine 188 to leucine 208. The region spanning phenylalanine 19 to alanine 210 is the ABC transmembrane type-1 domain.

It belongs to the binding-protein-dependent transport system permease family. As to quaternary structure, the complex is composed of two ATP-binding proteins (GlnQ), two transmembrane proteins (GlnM and GlnP) and a solute-binding protein (GlnH).

The protein resides in the cell membrane. Functionally, part of the ABC transporter complex GlnHMPQ involved in glutamine transport. Probably responsible for the translocation of the substrate across the membrane. This is Probable glutamine ABC transporter permease protein GlnP (glnP) from Bacillus subtilis (strain 168).